The chain runs to 447 residues: D-ribitol-5-phosphate cytidylyltransferase (447 aa).

Belongs to the IspD/TarI cytidylyltransferase family. IspD subfamily. As to quaternary structure, homodimer.

Its subcellular location is the cytoplasm. The protein resides in the cytosol. It catalyses the reaction D-ribitol 5-phosphate + CTP + H(+) = CDP-L-ribitol + diphosphate. The catalysed reaction is D-ribose 5-phosphate + CTP + H(+) = CDP-D-ribose + diphosphate. The enzyme catalyses D-ribulose 5-phosphate + CTP + H(+) = CDP-D-ribulose + diphosphate. The protein operates within protein modification; protein glycosylation. Its function is as follows. Cytidylyltransferase required for protein O-linked mannosylation. Catalyzes the formation of CDP-ribitol nucleotide sugar from D-ribitol 5-phosphate. CDP-ribitol is a substrate of FKTN during the biosynthesis of the phosphorylated O-mannosyl trisaccharide (N-acetylgalactosamine-beta-3-N-acetylglucosamine-beta-4-(phosphate-6-)mannose), a carbohydrate structure present in alpha-dystroglycan (DAG1), which is required for binding laminin G-like domain-containing extracellular proteins with high affinity. Shows activity toward other pentose phosphate sugars and mediates formation of CDP-ribulose or CDP-ribose using CTP and ribulose-5-phosphate or ribose-5-phosphate, respectively. Not involved in dolichol production. The polypeptide is D-ribitol-5-phosphate cytidylyltransferase (Crppa) (Mus musculus (Mouse)).